We begin with the raw amino-acid sequence, 407 residues long: MSNNANNCLPLASYTLAVFPGIPVAPIEQDFPVSVRITMAAIDPARIEGDEEEPATLRILKPADNFDDEDDEDDEDEDDDDEDDEVSAEDMAQIKKLIAANEDGLDEVEGGDDDEDDDEDDEMEFEEDDEDDDDEGEIEDFVVCTLSPKFGYQQTLDLVITPGEQIMFEVTGSYAIHLSGNYIEHPYDMEDEDELLALGEDDEDDEDELDEGEYDLSPDEDEVINGDERLVELMEQDDEDDEDDEDEEEEPVVEPKKILKRAAEEKKQEKAAKKAKVAFTKNLEQGPTPSEPKPKLVTRQLEGGVKIEDRTVGEGPSAKVGSKVGVRYVGKLANGKVFDSNSKGKPFYFSVGKGEVIRGWDIGVQGMKVKGERRIIIPPGMAYGKQKLPGIPPNSQLTFDVKVVNIK.

Disordered regions lie at residues Arg-46 to Gly-136, Asp-191 to Val-223, and Gln-236 to Val-297. 2 stretches are compositionally biased toward acidic residues: residues Asn-65 to Ala-88 and Asp-103 to Gly-136. Acidic residues predominate over residues Gln-236–Val-252. The span at Val-253–Ala-272 shows a compositional bias: basic and acidic residues. One can recognise a PPIase FKBP-type domain in the interval Gly-321 to Lys-407.

Belongs to the FKBP-type PPIase family. FKBP3/4 subfamily.

It is found in the nucleus. It localises to the nucleolus. It carries out the reaction [protein]-peptidylproline (omega=180) = [protein]-peptidylproline (omega=0). Inhibited by both FK506 and rapamycin. Functionally, PPIases accelerate the folding of proteins. It catalyzes the cis-trans isomerization of proline imidic peptide bonds in oligopeptides. The polypeptide is FK506-binding protein 3 (FPR3) (Yarrowia lipolytica (strain CLIB 122 / E 150) (Yeast)).